We begin with the raw amino-acid sequence, 604 residues long: ERAD-associated E3 ubiquitin-protein ligase component HRD3B (604 aa).

Positions 1 to 25 are cleaved as a signal peptide; it reads MRVSGQSIIAISLFTLSLYIHRVQA. Residues 48-69 are disordered; that stretch reads ESSDFDEFGESEPKSEEELDPG. N78 and N105 each carry an N-linked (GlcNAc...) asparagine glycan. Sel1-like repeat units lie at residues 125 to 160, 244 to 274, 279 to 307, 311 to 344, 346 to 380, 464 to 492, and 498 to 528; these read PHAQ…AGGN, VAMH…FSKA, LGYL…AANN, SGHY…ANAG, PKAF…AERG, AALL…YMYA, and AQAM…YDQA. N293 carries an N-linked (GlcNAc...) asparagine glycan.

Belongs to the sel-1 family.

Its function is as follows. May be involved in the endoplasmic reticulum (ER) quality control system called ER-associated degradation (ERAD). This chain is ERAD-associated E3 ubiquitin-protein ligase component HRD3B, found in Arabidopsis thaliana (Mouse-ear cress).